A 119-amino-acid chain; its full sequence is Holo-[acyl-carrier-protein] synthase (119 aa).

The Mg(2+) site is built by Asp-8 and Glu-58.

The protein belongs to the P-Pant transferase superfamily. AcpS family. It depends on Mg(2+) as a cofactor.

The protein localises to the cytoplasm. The enzyme catalyses apo-[ACP] + CoA = holo-[ACP] + adenosine 3',5'-bisphosphate + H(+). Its function is as follows. Transfers the 4'-phosphopantetheine moiety from coenzyme A to a Ser of acyl-carrier-protein. This Limosilactobacillus fermentum (strain NBRC 3956 / LMG 18251) (Lactobacillus fermentum) protein is Holo-[acyl-carrier-protein] synthase.